The sequence spans 337 residues: tRNA N6-adenosine threonylcarbamoyltransferase (337 aa).

Positions 111 and 115 each coordinate Fe cation. Substrate-binding positions include 134 to 138, Asp-167, Gly-180, and Asn-272; that span reads LVSGG. Residue Asp-300 coordinates Fe cation.

It belongs to the KAE1 / TsaD family. Fe(2+) serves as cofactor.

It localises to the cytoplasm. It catalyses the reaction L-threonylcarbamoyladenylate + adenosine(37) in tRNA = N(6)-L-threonylcarbamoyladenosine(37) in tRNA + AMP + H(+). In terms of biological role, required for the formation of a threonylcarbamoyl group on adenosine at position 37 (t(6)A37) in tRNAs that read codons beginning with adenine. Is involved in the transfer of the threonylcarbamoyl moiety of threonylcarbamoyl-AMP (TC-AMP) to the N6 group of A37, together with TsaE and TsaB. TsaD likely plays a direct catalytic role in this reaction. The sequence is that of tRNA N6-adenosine threonylcarbamoyltransferase from Salmonella agona (strain SL483).